Consider the following 226-residue polypeptide: MSTLAEVYTIIEDAEQECRKGDFTNAKAKYQEAIEVLGPQNENLSQNKLSSDVTQAIDLLKQDITAKIQELELLIEKQSSEENNIGMVNNNMLIGSVILNNKSPINGISNARNWDNPAYQDTLSPINDPLLMSILNRLQFNLNNDIQLKTEGGKNSKNSEMKINLRLEQFKKELVLYEQKKFKEYGMKIDEITKENKKLANEIGRLRERWDSLVESAKQRRDKQKN.

N-acetylserine is present on serine 2. Coiled coils occupy residues 52–85 (DVTQ…ENNI) and 182–209 (FKEY…LRER).

This sequence belongs to the ATG38 family. In terms of assembly, homodimer. Component of the autophagy-specific VPS34 PI3-kinase complex I composed of VPS15, VPS30, VPS34, ATG14 and an ATG38 homodimer. Interacts directly with ATG14 and VPS34.

The protein resides in the cytoplasm. It localises to the preautophagosomal structure membrane. Autophagy-related protein required for cytoplasm to vacuole transport (Cvt) and autophagy as a part of the autophagy-specific VPS34 PI3-kinase complex I. This complex is essential to recruit the ATG8-phosphatidylinositol conjugate and the ATG12-ATG5 conjugate to the pre-autophagosomal structure. ATG38 is required for the integrity of the active PI3-kinase complex I by maintaining an association between VPS15-VPS34 and ATG14-VPS30 subcomplexes. This is PtdIns3K complex I subunit atg38 from Saccharomyces cerevisiae (strain ATCC 204508 / S288c) (Baker's yeast).